The following is a 160-amino-acid chain: Lipoprotein signal peptidase (160 aa).

The next 3 helical transmembrane spans lie at 13–33 (IYIT…RLII), 72–92 (WFLS…ITKL), and 104–124 (SLII…GFVV). Residues D125 and D143 contribute to the active site. A helical membrane pass occupies residues 134–154 (WHFATFNIADCSIFIGIIILM).

The protein belongs to the peptidase A8 family.

The protein resides in the cell inner membrane. The enzyme catalyses Release of signal peptides from bacterial membrane prolipoproteins. Hydrolyzes -Xaa-Yaa-Zaa-|-(S,diacylglyceryl)Cys-, in which Xaa is hydrophobic (preferably Leu), and Yaa (Ala or Ser) and Zaa (Gly or Ala) have small, neutral side chains.. It participates in protein modification; lipoprotein biosynthesis (signal peptide cleavage). In terms of biological role, this protein specifically catalyzes the removal of signal peptides from prolipoproteins. This chain is Lipoprotein signal peptidase, found in Buchnera aphidicola subsp. Acyrthosiphon pisum (strain APS) (Acyrthosiphon pisum symbiotic bacterium).